A 298-amino-acid polypeptide reads, in one-letter code: MIIKRREYMRIADYSVTKAVLDRHGFTFKKSFGQNFLTDTNILQKIVDTAEIDQNVNVIEIGPGIGALTEFLAENAAEVMAFEIDDRLVPILADTLRDFDNVQVVNQDILKADLQTQIKQFKNPDLPIKVVANLPYYITTPILMHLIESKIPFQEFVVMMQREVADRISAEPNTKAYGSLSIAVQYYMTAKVAFIVPRTVFVPAPNVDSAILKMVRRDQPLIEVEDEDFFFRVSRLSFVHRRKTLWNNLTSHFGKSEDIKAKLEKGLALADIKPSIRGEALSIQDFGKLADALKEVGL.

Positions 35, 37, 62, 83, 108, and 133 each coordinate S-adenosyl-L-methionine.

Belongs to the class I-like SAM-binding methyltransferase superfamily. rRNA adenine N(6)-methyltransferase family. RsmA subfamily.

The protein resides in the cytoplasm. The catalysed reaction is adenosine(1518)/adenosine(1519) in 16S rRNA + 4 S-adenosyl-L-methionine = N(6)-dimethyladenosine(1518)/N(6)-dimethyladenosine(1519) in 16S rRNA + 4 S-adenosyl-L-homocysteine + 4 H(+). Specifically dimethylates two adjacent adenosines (A1518 and A1519) in the loop of a conserved hairpin near the 3'-end of 16S rRNA in the 30S particle. May play a critical role in biogenesis of 30S subunits. The polypeptide is Ribosomal RNA small subunit methyltransferase A (Streptococcus pyogenes serotype M4 (strain MGAS10750)).